The chain runs to 117 residues: Phosphoribosyl-ATP pyrophosphatase (117 aa).

Belongs to the PRA-PH family.

It localises to the cytoplasm. It carries out the reaction 1-(5-phospho-beta-D-ribosyl)-ATP + H2O = 1-(5-phospho-beta-D-ribosyl)-5'-AMP + diphosphate + H(+). Its pathway is amino-acid biosynthesis; L-histidine biosynthesis; L-histidine from 5-phospho-alpha-D-ribose 1-diphosphate: step 2/9. The sequence is that of Phosphoribosyl-ATP pyrophosphatase from Rhodospirillum rubrum (strain ATCC 11170 / ATH 1.1.1 / DSM 467 / LMG 4362 / NCIMB 8255 / S1).